The sequence spans 249 residues: Small ribosomal subunit protein eS6 (249 aa).

Disordered regions lie at residues 161–181 and 194–249; these read PLAK…RLVT and LKKQ…SSQK. Residues 216 to 229 are compositionally biased toward basic and acidic residues; sequence RSKEAKEKRQEQIA. Residues Ser235, Ser236, Ser240, Ser244, and Ser247 each carry the phosphoserine modification. The span at 236–249 shows a compositional bias: low complexity; that stretch reads SLRASTSKSESSQK.

The protein belongs to the eukaryotic ribosomal protein eS6 family. Component of the small ribosomal subunit. Part of the small subunit (SSU) processome, composed of more than 70 proteins and the RNA chaperone small nucleolar RNA (snoRNA) U3. Ribosomal protein S6 is the major substrate of protein kinases in eukaryote ribosomes. The phosphorylation is stimulated by growth factors, tumor promoting agents, and mitogens. It is dephosphorylated at growth arrest.

The protein localises to the cytoplasm. Its subcellular location is the nucleus. The protein resides in the nucleolus. Component of the 40S small ribosomal subunit. Plays an important role in controlling cell growth and proliferation through the selective translation of particular classes of mRNA. Part of the small subunit (SSU) processome, first precursor of the small eukaryotic ribosomal subunit. During the assembly of the SSU processome in the nucleolus, many ribosome biogenesis factors, an RNA chaperone and ribosomal proteins associate with the nascent pre-rRNA and work in concert to generate RNA folding, modifications, rearrangements and cleavage as well as targeted degradation of pre-ribosomal RNA by the RNA exosome. In Xenopus laevis (African clawed frog), this protein is Small ribosomal subunit protein eS6 (rps6).